The following is a 254-amino-acid chain: Acetylglutamate kinase (254 aa).

Residues 40-41, Arg-62, and Asn-158 each bind substrate; that span reads GG.

It belongs to the acetylglutamate kinase family. ArgB subfamily.

The protein resides in the cytoplasm. The catalysed reaction is N-acetyl-L-glutamate + ATP = N-acetyl-L-glutamyl 5-phosphate + ADP. The protein operates within amino-acid biosynthesis; L-arginine biosynthesis; N(2)-acetyl-L-ornithine from L-glutamate: step 2/4. Catalyzes the ATP-dependent phosphorylation of N-acetyl-L-glutamate. In Chloroflexus aggregans (strain MD-66 / DSM 9485), this protein is Acetylglutamate kinase.